We begin with the raw amino-acid sequence, 198 residues long: Ribonuclease HII (198 aa).

An RNase H type-2 domain is found at 10-198 (QLVAGVDEVG…PVKRALGLAS (189 aa)). A divalent metal cation-binding residues include Asp16, Glu17, and Asp108.

Belongs to the RNase HII family. The cofactor is Mn(2+). Mg(2+) is required as a cofactor.

It is found in the cytoplasm. It catalyses the reaction Endonucleolytic cleavage to 5'-phosphomonoester.. In terms of biological role, endonuclease that specifically degrades the RNA of RNA-DNA hybrids. This is Ribonuclease HII from Shigella boydii serotype 18 (strain CDC 3083-94 / BS512).